A 479-amino-acid chain; its full sequence is Nuclear receptor subfamily 6 group A member 1 (479 aa).

Residues 1-32 (MERDERPPSGGGGGGGSAGFLEPPAALPPPPR) form a disordered region. A compositionally biased stretch (gly residues) spans 9–18 (SGGGGGGGSA). A DNA-binding region (nuclear receptor) is located at residues 57–132 (QRTCLICGDR…MGMNRKAIRE (76 aa)). Zn(2+)-binding residues include cysteine 60, cysteine 63, cysteine 77, cysteine 80, cysteine 96, cysteine 102, cysteine 112, and cysteine 115. 2 consecutive NR C4-type zinc fingers follow at residues 60–80 (CLICGDRATGLHYGIISCEGC) and 96–120 (CSRDKNCVMSRKQRNRCQYCRLLKC). Disordered stretches follow at residues 131 to 150 (REDGMPGGRNKSIGPVQISE) and 162 to 198 (FEEEANHWSNHGDSDHSSPGNRASESNQPSPGSTLSS). Basic and acidic residues predominate over residues 165–177 (EANHWSNHGDSDH). The sufficient for interaction with UIMC1 stretch occupies residues 172–252 (HGDSDHSSPG…RSLDPQSYSL (81 aa)). Positions 178-198 (SSPGNRASESNQPSPGSTLSS) are enriched in polar residues. One can recognise an NR LBD domain in the interval 248–479 (QSYSLIHQLV…HSCKTSVGKE (232 aa)).

The protein belongs to the nuclear hormone receptor family. NR6 subfamily. In terms of assembly, homodimer. Interacts with UIMC1.

The protein localises to the nucleus. In terms of biological role, orphan nuclear receptor that binds to a response element containing the sequence 5'-TCAAGGTCA-3'. Acts as a regulator of embryonic stem cell pluripotency by mediating repression of POU5F1/OCT4: binds to the DR0 element within the POU5F1/OCT4 promoter and inhibits POU5F1/OCT4 expression during embryonic stem cell differentiation. Involved in the regulation of gene expression in germ cell development during gametogenesis. The chain is Nuclear receptor subfamily 6 group A member 1 (NR6A1) from Sus scrofa (Pig).